The primary structure comprises 484 residues: Probable D-lactate dehydrogenase, mitochondrial (484 aa).

The N-terminal 52 residues, 1–52 (MAMLLRVATQRLSPWRSFCSRGSQGGLSQDFVEALKAVVGSPHVSTASAVRE), are a transit peptide targeting the mitochondrion. K36 carries the N6-acetyllysine modification. The 181-residue stretch at 62–242 (RCQPPDAVVW…TSTTLRLHPA (181 aa)) folds into the FAD-binding PCMH-type domain. K292 is subject to N6-acetyllysine. Residue K335 is modified to N6-acetyllysine; alternate. K335 bears the N6-succinyllysine; alternate mark. N6-acetyllysine is present on residues K422 and K449.

This sequence belongs to the FAD-binding oxidoreductase/transferase type 4 family. As to quaternary structure, interacts with CSRP3. FAD serves as cofactor. In terms of tissue distribution, readily detected in liver and kidney, with a weaker signal observed in heart, skeletal muscle, stomach, brain, and lung.

Its subcellular location is the mitochondrion. The enzyme catalyses (R)-lactate + 2 Fe(III)-[cytochrome c] = 2 Fe(II)-[cytochrome c] + pyruvate + 2 H(+). In terms of biological role, involved in D-lactate, but not L-lactate catabolic process. This is Probable D-lactate dehydrogenase, mitochondrial from Mus musculus (Mouse).